We begin with the raw amino-acid sequence, 638 residues long: Probable potassium transport system protein Kup (638 aa).

12 consecutive transmembrane segments (helical) span residues 25–45, 65–85, 114–134, 152–172, 184–204, 226–246, 262–282, 291–311, 352–372, 382–402, 410–430, and 434–454; these read LAIA…LYSL, VISL…LLFV, AGAL…DAVI, PHLS…LFWI, FGPI…YHIV, LLQA…AEAL, AYGL…ALLI, PFFL…STVA, IYVP…VVGF, YGIA…VVMV, LLVG…FGAN, and VAQG…LLMT.

The protein belongs to the HAK/KUP transporter (TC 2.A.72) family.

The protein resides in the cell inner membrane. The catalysed reaction is K(+)(in) + H(+)(in) = K(+)(out) + H(+)(out). In terms of biological role, transport of potassium into the cell. Likely operates as a K(+):H(+) symporter. This chain is Probable potassium transport system protein Kup, found in Burkholderia cenocepacia (strain HI2424).